The following is a 46-amino-acid chain: Large ribosomal subunit protein bL33A (46 aa).

It belongs to the bacterial ribosomal protein bL33 family.

The chain is Large ribosomal subunit protein bL33A from Mesomycoplasma hyopneumoniae (strain 7448) (Mycoplasma hyopneumoniae).